Consider the following 468-residue polypeptide: Nuclear distribution protein PAC1-2 (468 aa).

The region spanning 13–45 (QAEELHKSIIAYLTSLNLATTANTLRAELNLPE) is the LisH domain. A coiled-coil region spans residues 66-92 (SVIRLQKKVLDLQAENAHLKNEIENAG). 8 WD repeats span residues 118 to 159 (GHRL…RTLK), 161 to 201 (HTKA…KNIR), 205 to 251 (GHDH…CVKT), 254 to 293 (GHND…PECR), 298 to 358 (GHEN…IKVL), 360 to 399 (GHDN…KCVQ), 404 to 429 (MFDG…GDAG), and 430 to 468 (DGTP…IFAN).

It belongs to the WD repeat LIS1/nudF family. Self-associates. Interacts with NDL1 and dynein.

It is found in the cytoplasm. The protein localises to the cytoskeleton. The protein resides in the spindle pole. Functionally, positively regulates the activity of the minus-end directed microtubule motor protein dynein. May enhance dynein-mediated microtubule sliding by targeting dynein to the microtubule plus end. Required for nuclear migration during vegetative growth as well as development. Required for retrograde early endosome (EE) transport from the hyphal tip. Required for localization of dynein to the mitotic spindle poles. Recruits additional proteins to the dynein complex at SPBs. The protein is Nuclear distribution protein PAC1-2 of Podospora anserina (strain S / ATCC MYA-4624 / DSM 980 / FGSC 10383) (Pleurage anserina).